A 183-amino-acid chain; its full sequence is MAILRLENGTTYTQLADISLELAKLNVTLNYWPIENEATRQLLKQASLTDEEKEIVLTSLDGYFEQLKQEAGYQARDLIVLHPEIANLDTLLAKFERCHTHADDEVRYIIDGEGVFGFVFADGSQGELTIQPQEYINVPAHSEHWFHLTASKRVKAVRYFTSTAGWVPEYTETVIRFPSLTAV.

4 residues coordinate Fe(2+): His99, His101, Glu105, and His144. Residues His99, His101, Glu105, and His144 each contribute to the Ni(2+) site.

It belongs to the acireductone dioxygenase (ARD) family. Monomer. The cofactor is Fe(2+). It depends on Ni(2+) as a cofactor.

The enzyme catalyses 1,2-dihydroxy-5-(methylsulfanyl)pent-1-en-3-one + O2 = 3-(methylsulfanyl)propanoate + CO + formate + 2 H(+). The catalysed reaction is 1,2-dihydroxy-5-(methylsulfanyl)pent-1-en-3-one + O2 = 4-methylsulfanyl-2-oxobutanoate + formate + 2 H(+). The protein operates within amino-acid biosynthesis; L-methionine biosynthesis via salvage pathway; L-methionine from S-methyl-5-thio-alpha-D-ribose 1-phosphate: step 5/6. In terms of biological role, catalyzes 2 different reactions between oxygen and the acireductone 1,2-dihydroxy-3-keto-5-methylthiopentene (DHK-MTPene) depending upon the metal bound in the active site. Fe-containing acireductone dioxygenase (Fe-ARD) produces formate and 2-keto-4-methylthiobutyrate (KMTB), the alpha-ketoacid precursor of methionine in the methionine recycle pathway. Ni-containing acireductone dioxygenase (Ni-ARD) produces methylthiopropionate, carbon monoxide and formate, and does not lie on the methionine recycle pathway. The sequence is that of Acireductone dioxygenase from Microcystis aeruginosa (strain NIES-843 / IAM M-2473).